A 387-amino-acid polypeptide reads, in one-letter code: MFKHLRPVWAEIDLDKLVYNMQQIKNICKGREIIAVVKADAYGHGALDIAPILLENGATRLAVAVLNEAIELRRGGIDAPIMVLGFTPDSLIETSLKYNIEQTVYSYEIAKEISEVAVKSNRVAKIHIALDTGMGRIGFLPDKESIDKIYKLSKLPNIQIEGIFSHFASADEQDKTYTKLQFNKFLWVCNSLEERGIDIKIRHIANSAAIIDMPELHLEGVRPGIIMYGYYPSSEVNKGKLDLKPVMSLKTTIVHIKNMEKGKYISYGREFKTEKESIIATLPVGYADGYSRSLYDKGGKIILKEQLAPLVGRICMDQCMIDVSHIEDVKIGDEVILMGENKGIKMTAEEIGNLLGTINYEVTCMISKRVPRVYIRDGNIVGIRNYV.

Lys-38 acts as the Proton acceptor; specific for D-alanine in catalysis. An N6-(pyridoxal phosphate)lysine modification is found at Lys-38. Residue Arg-136 coordinates substrate. Tyr-267 (proton acceptor; specific for L-alanine) is an active-site residue. Met-316 is a binding site for substrate.

The protein belongs to the alanine racemase family. Pyridoxal 5'-phosphate serves as cofactor.

It carries out the reaction L-alanine = D-alanine. It functions in the pathway amino-acid biosynthesis; D-alanine biosynthesis; D-alanine from L-alanine: step 1/1. Catalyzes the interconversion of L-alanine and D-alanine. May also act on other amino acids. This Clostridium tetani (strain Massachusetts / E88) protein is Alanine racemase (alr).